The primary structure comprises 242 residues: Outer membrane protein class 4 (242 aa).

The N-terminal stretch at 1–22 (MTKQLKLSALFVALLASGTAVA) is a signal peptide. 7 consecutive repeat copies span residues 69-70 (AP), 71-72 (EP), 73-74 (EP), 75-76 (EP), 77-78 (EP), 79-80 (AP), and 81-82 (AP). Residues 69–82 (APEPEPEPEPAPAP) are 7 X 2 AA tandem repeats of X-P. The OmpA-like domain maps to 92–229 (YVDETISLSA…RVDVKIRSIV (138 aa)). A disulfide bond links Cys-191 and Cys-214.

The protein belongs to the outer membrane OOP (TC 1.B.6) superfamily.

The protein resides in the cell outer membrane. The protein is Outer membrane protein class 4 (rmpM) of Neisseria meningitidis serogroup A / serotype 4A (strain DSM 15465 / Z2491).